A 586-amino-acid chain; its full sequence is Clathrin heavy chain linker domain-containing protein 1 (586 aa).

A coiled-coil region spans residues 174-232 (MNLDALTKYMKHLEDKYAEIKQAMLIKYVPAQRKADLDEEMIVLLKRRDVAENLNKKLQ).

This Homo sapiens (Human) protein is Clathrin heavy chain linker domain-containing protein 1 (CLHC1).